The sequence spans 292 residues: Protease HtpX homolog (292 aa).

A run of 2 helical transmembrane segments spans residues 7–27 (TFIL…LIGG) and 29–49 (GGAV…WWNS). His-131 is a Zn(2+) binding site. The active site involves Glu-132. A Zn(2+)-binding site is contributed by His-135. 2 helical membrane-spanning segments follow: residues 148–168 (ATMA…SMFG) and 178–198 (LAAI…QMAI). Residue Glu-203 participates in Zn(2+) binding.

This sequence belongs to the peptidase M48B family. Zn(2+) is required as a cofactor.

The protein resides in the cell inner membrane. This is Protease HtpX homolog from Paracoccus denitrificans (strain Pd 1222).